A 432-amino-acid chain; its full sequence is EF-hand calcium-binding domain-containing protein 3 (432 aa).

EF-hand domains are found at residues 45–80 and 81–116; these read AQLE…LGMN and LNAY…KKLF. Ca(2+) contacts are provided by Asp-94, Asp-96, Asp-98, Lys-100, and Asp-105. Tyr-273 is subject to Phosphotyrosine. The disordered stretch occupies residues 394–432; it reads NVNKTSPSNSGLSSPSDLSESDPETGRKRKRKSSRGFRQ. Positions 399-411 are enriched in low complexity; that stretch reads SPSNSGLSSPSDL. Positions 420–432 are enriched in basic residues; it reads RKRKRKSSRGFRQ.

The chain is EF-hand calcium-binding domain-containing protein 3 (Efcab3) from Rattus norvegicus (Rat).